A 437-amino-acid polypeptide reads, in one-letter code: GTPase Obg (437 aa).

The Obg domain occupies 2 to 160 (SMFLDTAKIS…RELQLELKIL (159 aa)). Residues 127 to 146 (GNIRFATPRNPAPEIAENGE) form a disordered region. In terms of domain architecture, OBG-type G spans 161–338 (ADVGLVGFPS…LLEATAELLD (178 aa)). GTP is bound by residues 167 to 174 (GFPSVGKS), 192 to 196 (FTTIV), 214 to 217 (DLPG), 284 to 287 (NKMD), and 319 to 321 (SSL). Residues Ser-174 and Thr-194 each contribute to the Mg(2+) site. The OCT domain maps to 359–437 (GFNEEERPFE…IGNFEFEFVD (79 aa)).

This sequence belongs to the TRAFAC class OBG-HflX-like GTPase superfamily. OBG GTPase family. In terms of assembly, monomer. Mg(2+) is required as a cofactor.

It is found in the cytoplasm. An essential GTPase which binds GTP, GDP and possibly (p)ppGpp with moderate affinity, with high nucleotide exchange rates and a fairly low GTP hydrolysis rate. Plays a role in control of the cell cycle, stress response, ribosome biogenesis and in those bacteria that undergo differentiation, in morphogenesis control. This chain is GTPase Obg, found in Streptococcus thermophilus (strain ATCC BAA-491 / LMD-9).